Here is a 334-residue protein sequence, read N- to C-terminus: Phosphate acyltransferase (334 aa).

This sequence belongs to the PlsX family. In terms of assembly, homodimer. Probably interacts with PlsY.

The protein localises to the cytoplasm. It carries out the reaction a fatty acyl-[ACP] + phosphate = an acyl phosphate + holo-[ACP]. Its pathway is lipid metabolism; phospholipid metabolism. Catalyzes the reversible formation of acyl-phosphate (acyl-PO(4)) from acyl-[acyl-carrier-protein] (acyl-ACP). This enzyme utilizes acyl-ACP as fatty acyl donor, but not acyl-CoA. In Acholeplasma laidlawii (strain PG-8A), this protein is Phosphate acyltransferase.